A 225-amino-acid chain; its full sequence is MGFGDLKSPAGLQVLNDYLADKSYIEGYVPSQADVAVFEAVSGPPPADLCHALRWYNHIKSYEKEKASLPGVKKALGKYGPANVEDTTESGATDSKDDDDIDLFGSDDEEESEEAKRLREERLAQYESKKAKKPALVAKSSILLDVKPWDDETDMAKLEECVRSIQADGLVWGSSKLVPVGYGIKKLQIQCVVEDDKVGTDMLEEQITAFEDYVQSMDVAAFNKI.

In terms of domain architecture, GST C-terminal spans 1-90 (MGFGDLKSPA…PANVEDTTES (90 aa)). Lys-7 is modified (N6-acetyllysine). Phosphoserine occurs at positions 8 and 42. Positions 79–98 (YGPANVEDTTESGATDSKDD) are disordered. A phosphothreonine mark is found at Thr-88 and Thr-93. 2 positions are modified to phosphoserine: Ser-95 and Ser-106. Lys-147 is covalently cross-linked (Glycyl lysine isopeptide (Lys-Gly) (interchain with G-Cter in SUMO2)). Ser-174 bears the Phosphoserine mark.

Belongs to the EF-1-beta/EF-1-delta family. EF-1 is composed of 4 subunits: alpha, beta (alpha subunit of the eEF1B subcomplex), delta (beta subunit of the eEF1B subcomplex), and gamma (gamma subunit of the eEF1B subcomplex). Interacts with elongation factor EEF1A1.

Functionally, catalytic subunit of the guanine nucleotide exchange factor (GEF) (eEF1B subcomplex) of the eukaryotic elongation factor 1 complex (eEF1). Stimulates the exchange of GDP for GTP on elongation factor 1A (eEF1A), probably by displacing GDP from the nucleotide binding pocket in eEF1A. In Sus scrofa (Pig), this protein is Elongation factor 1-beta (EEF1B).